The primary structure comprises 204 residues: Pyridoxal 5'-phosphate synthase subunit PdxT (204 aa).

Position 52–54 (52–54 (GES)) interacts with L-glutamine. The Nucleophile role is filled by Cys84. L-glutamine is bound by residues Arg116 and 143-144 (IR). Active-site charge relay system residues include His184 and Glu186.

The protein belongs to the glutaminase PdxT/SNO family. As to quaternary structure, in the presence of PdxS, forms a dodecamer of heterodimers. Only shows activity in the heterodimer.

The enzyme catalyses aldehydo-D-ribose 5-phosphate + D-glyceraldehyde 3-phosphate + L-glutamine = pyridoxal 5'-phosphate + L-glutamate + phosphate + 3 H2O + H(+). It carries out the reaction L-glutamine + H2O = L-glutamate + NH4(+). Its pathway is cofactor biosynthesis; pyridoxal 5'-phosphate biosynthesis. In terms of biological role, catalyzes the hydrolysis of glutamine to glutamate and ammonia as part of the biosynthesis of pyridoxal 5'-phosphate. The resulting ammonia molecule is channeled to the active site of PdxS. The chain is Pyridoxal 5'-phosphate synthase subunit PdxT from Pyrobaculum aerophilum (strain ATCC 51768 / DSM 7523 / JCM 9630 / CIP 104966 / NBRC 100827 / IM2).